The chain runs to 125 residues: Small ribosomal subunit protein uS13 (125 aa).

The tract at residues 101–125 is disordered; that stretch reads QRTKTNARTRKGKRKTVANKKIAAK.

It belongs to the universal ribosomal protein uS13 family. As to quaternary structure, part of the 30S ribosomal subunit. Forms a loose heterodimer with protein S19. Forms two bridges to the 50S subunit in the 70S ribosome.

In terms of biological role, located at the top of the head of the 30S subunit, it contacts several helices of the 16S rRNA. In the 70S ribosome it contacts the 23S rRNA (bridge B1a) and protein L5 of the 50S subunit (bridge B1b), connecting the 2 subunits; these bridges are implicated in subunit movement. Contacts the tRNAs in the A and P-sites. In Borrelia duttonii (strain Ly), this protein is Small ribosomal subunit protein uS13.